Consider the following 312-residue polypeptide: Acetyl-coenzyme A carboxylase carboxyl transferase subunit alpha (312 aa).

The CoA carboxyltransferase C-terminal domain maps to R36 to T286.

The protein belongs to the AccA family. As to quaternary structure, acetyl-CoA carboxylase is a heterohexamer composed of biotin carboxyl carrier protein (AccB), biotin carboxylase (AccC) and two subunits each of ACCase subunit alpha (AccA) and ACCase subunit beta (AccD).

It is found in the cytoplasm. It carries out the reaction N(6)-carboxybiotinyl-L-lysyl-[protein] + acetyl-CoA = N(6)-biotinyl-L-lysyl-[protein] + malonyl-CoA. Its pathway is lipid metabolism; malonyl-CoA biosynthesis; malonyl-CoA from acetyl-CoA: step 1/1. Its function is as follows. Component of the acetyl coenzyme A carboxylase (ACC) complex. First, biotin carboxylase catalyzes the carboxylation of biotin on its carrier protein (BCCP) and then the CO(2) group is transferred by the carboxyltransferase to acetyl-CoA to form malonyl-CoA. The protein is Acetyl-coenzyme A carboxylase carboxyl transferase subunit alpha of Helicobacter pylori (strain G27).